Reading from the N-terminus, the 179-residue chain is NADH:FAD oxidoreductase (179 aa).

Residue 48 to 51 coordinates FAD; the sequence is TCSA. Residue 54-57 coordinates NAD(+); that stretch reads SVCD. FAD-binding positions include 65–71, Ala-99, 104–109, and Ser-144; these read CINRKSY and VPMEER. Residues His-145 and 166-169 each bind NAD(+); that span reads YHRR. An FAD-binding site is contributed by Tyr-166.

It belongs to the non-flavoprotein flavin reductase family. In terms of assembly, homodimer. The chlorophenol-4-monooxygenase is composed of an oxygenase component TftD and a reductase component TftC.

The catalysed reaction is FADH2 + NAD(+) = FAD + NADH + 2 H(+). It functions in the pathway xenobiotic degradation. Its function is as follows. Reductase component of a two-component system that degrades 2,4,5-trichlorophenol. TftC provides the FADH(2) required by TftD. TftD oxidizes 2,4,5-trichlorophenol (2,4,5-TCP) to 2,5-dichloro-p-benzoquinone, which is chemically reduced to 2,5-dichloro-p-hydroquinone (2,5-DiCHQ). Then, TftD oxidizes the latter to 5-chloro-2-hydroxy-p-benzoquinone. The chain is NADH:FAD oxidoreductase (tftC) from Burkholderia cepacia (Pseudomonas cepacia).